The following is a 356-amino-acid chain: Cysteine proteinase 3 (356 aa).

Positions 1–16 (MSRLSLVLILVAGLFA) are cleaved as a signal peptide. Residues 17–138 (TALAGPATFA…KGNLKLTNVV (122 aa)) constitute a propeptide, activation peptide. A glycan (N-linked (GlcNAc...) asparagine) is linked at N123. Intrachain disulfides connect C160–C203 and C194–C236. C163 is a catalytic residue. The N-linked (GlcNAc...) asparagine glycan is linked to N252. An intrachain disulfide couples C294 to C344. Active-site residues include H303 and N323.

Belongs to the peptidase C1 family. In terms of tissue distribution, predominantly expressed in stem and root.

The protein resides in the vacuole. The chain is Cysteine proteinase 3 (CYP-3) from Solanum lycopersicum (Tomato).